The sequence spans 138 residues: Ribosome-binding factor A (138 aa).

A disordered region spans residues 117 to 138; the sequence is ERQNKPAASTEKPPVGSLDADL.

The protein belongs to the RbfA family. In terms of assembly, monomer. Binds 30S ribosomal subunits, but not 50S ribosomal subunits or 70S ribosomes.

The protein localises to the cytoplasm. In terms of biological role, one of several proteins that assist in the late maturation steps of the functional core of the 30S ribosomal subunit. Associates with free 30S ribosomal subunits (but not with 30S subunits that are part of 70S ribosomes or polysomes). Required for efficient processing of 16S rRNA. May interact with the 5'-terminal helix region of 16S rRNA. In Acaryochloris marina (strain MBIC 11017), this protein is Ribosome-binding factor A.